The chain runs to 382 residues: Anhydro-N-acetylmuramic acid kinase (382 aa).

9 to 16 (GTSLDGID) lines the ATP pocket.

Belongs to the anhydro-N-acetylmuramic acid kinase family.

It carries out the reaction 1,6-anhydro-N-acetyl-beta-muramate + ATP + H2O = N-acetyl-D-muramate 6-phosphate + ADP + H(+). It functions in the pathway amino-sugar metabolism; 1,6-anhydro-N-acetylmuramate degradation. The protein operates within cell wall biogenesis; peptidoglycan recycling. Functionally, catalyzes the specific phosphorylation of 1,6-anhydro-N-acetylmuramic acid (anhMurNAc) with the simultaneous cleavage of the 1,6-anhydro ring, generating MurNAc-6-P. Is required for the utilization of anhMurNAc either imported from the medium or derived from its own cell wall murein, and thus plays a role in cell wall recycling. In Bacillus cereus (strain AH187), this protein is Anhydro-N-acetylmuramic acid kinase.